The chain runs to 534 residues: Arginine--tRNA ligase (534 aa).

A 'HIGH' region motif is present at residues 120 to 130 (ANPTGFLHLGH).

The protein belongs to the class-I aminoacyl-tRNA synthetase family. Monomer.

The protein resides in the cytoplasm. The enzyme catalyses tRNA(Arg) + L-arginine + ATP = L-arginyl-tRNA(Arg) + AMP + diphosphate. This Mesomycoplasma hyopneumoniae (strain 232) (Mycoplasma hyopneumoniae) protein is Arginine--tRNA ligase.